Consider the following 561-residue polypeptide: Delta(24)-sterol reductase (561 aa).

The Lumenal portion of the chain corresponds to 1-25 (MSDLQTPLVRPKRKKTWVDYFVKFR). S2 bears the Phosphoserine mark. Residues 26–46 (WIIVIFIVLPFSATFYFLIYL) traverse the membrane as a helical; Signal-anchor segment. Residues 47–561 (GDMWSESKSF…HLETAYAEAD (515 aa)) lie on the Cytoplasmic side of the membrane. An FAD-binding PCMH-type domain is found at 49-232 (MWSESKSFEK…VAAEIRLIKV (184 aa)). The interval 518 to 539 (CRKKYRAIGTFMSVYYKSKKGR) is interaction with calmodulin.

The protein belongs to the DIMINUTO family. Interacts with calmodulin.

Its subcellular location is the microsome membrane. The catalysed reaction is lathosterol + NADP(+) = 5alpha-cholesta-7,24-dien-3beta-ol + NADPH + H(+). Functionally, plays a critical role in the general process of plant cell elongation. Involved in the synthesis of campesterol, an early precursor of brassinolide. Required for the conversion of 24-methylenecholesterol to campesterol and for the conversion of isofucosterol to sitosterol. Necessary for both the isomerization and reduction of 24-methylenecholesterol. Regulates indirectly phytochrome-mediated light responses through the modulation of brassinosteroid biosynthesis. The protein is Delta(24)-sterol reductase (DIM) of Arabidopsis thaliana (Mouse-ear cress).